Consider the following 1322-residue polypeptide: Sal-like protein 1 (1322 aa).

Residues 1-41 (MSRRKQAKPQHFQSDPEVASLPRRDGDTEKGQPSRPTKSKD) form a disordered region. Residues 22-41 (PRRDGDTEKGQPSRPTKSKD) are compositionally biased toward basic and acidic residues. The segment at 43–65 (HVCGRCCAEFFELSDLLLHKKSC) adopts a C2H2-type 1; atypical zinc-finger fold. The tract at residues 78 to 128 (PASPAKTFPPGPSLNDPDDQMKDAANKADQEDCSDLSEPKGLDREESMEVE) is disordered. 2 stretches are compositionally biased toward basic and acidic residues: residues 96–107 (DQMKDAANKADQ) and 114–124 (SEPKGLDREES). Residue Lys440 forms a Glycyl lysine isopeptide (Lys-Gly) (interchain with G-Cter in SUMO2) linkage. 2 consecutive C2H2-type zinc fingers follow at residues 450–472 (HKCRFCAKVFGSDSALQIHLRSH) and 478–500 (FKCNICGNRFSTKGNLKVHFQRH). The tract at residues 578 to 659 (PIPISHSAAS…GGPGGTTFTN (82 aa)) is disordered. Over residues 584 to 594 (SAASPQGSVKS) the composition is skewed to polar residues. 3 positions are modified to phosphoserine: Ser591, Ser594, and Ser596. Residues 629-645 (NMASSAVPTAGNSTLNS) are compositionally biased toward polar residues. Glycyl lysine isopeptide (Lys-Gly) (interchain with G-Cter in SUMO2) cross-links involve residues Lys672, Lys689, and Lys700. 3 consecutive C2H2-type zinc fingers follow at residues 705-727 (NECIICHRVLSCQSALKMHYRTH), 733-755 (FKCKICGRAFTTKGNLKTHYSVH), and 765-787 (HSCPICQKKFTNAVVLQQHIRMH). 2 disordered regions span residues 789–855 (GGQI…SSPL) and 891–961 (SMEG…GLSP). Residues 819–832 (DLDNFSDENMEECP) show a composition bias toward acidic residues. The segment covering 842 to 855 (SADASQDSLSSSPL) has biased composition (low complexity). Over residues 898-935 (TNDSSSVGGDMESQSAGSPAISESTSSMQALSPSNSTQ) the composition is skewed to polar residues. Residues 936–948 (EFHKSPGMEEKPQ) show a composition bias toward basic and acidic residues. Residue Ser940 is modified to Phosphoserine. Residues Lys946 and Lys981 each participate in a glycyl lysine isopeptide (Lys-Gly) (interchain with G-Cter in SUMO2) cross-link. 2 consecutive C2H2-type zinc fingers follow at residues 1000–1022 (TACDICGKTFACQSALDIHYRSH) and 1028–1050 (FICTVCNRGFSTKGNLKQHMLTH). Lys1085 participates in a covalent cross-link: Glycyl lysine isopeptide (Lys-Gly) (interchain with G-Cter in SUMO2). The tract at residues 1094–1119 (VSPQDSKDAPTSHVPQGPLSSSATSP) is disordered. 2 consecutive C2H2-type zinc fingers follow at residues 1133-1155 (HYCNTCGKTFSSSSALQIHERTH) and 1161-1183 (FACTICGRAFTTKGNLKVHMGTH). Residues Lys1218, Lys1297, and Lys1317 each participate in a glycyl lysine isopeptide (Lys-Gly) (interchain with G-Cter in SUMO2) cross-link.

It belongs to the sal C2H2-type zinc-finger protein family. May associate with NuRD histone deacetylase complex (HDAC). Interacts with components of HDAC complex including HDAC1, HDAC2, RBBP4, RBPP7, MTA1 and MTA2. Interacts with CCNQ. Interacts with NSD2 (via PHD-type zinc fingers 1, 2 and 3). As to expression, expressed in the metanephric mesenchyme surrounding ureteric bud.

It is found in the nucleus. Transcriptional repressor involved in organogenesis. Plays an essential role in ureteric bud invasion during kidney development. The sequence is that of Sal-like protein 1 (Sall1) from Mus musculus (Mouse).